A 545-amino-acid chain; its full sequence is Membrane protein insertase YidC (545 aa).

A helical transmembrane segment spans residues 6 to 26; sequence LILFSALVLVLFLMWDAWQTD. The segment at 34–59 is disordered; sequence PPPPQPTASSGESSPVLPEAVPDAPP. 3 consecutive transmembrane segments (helical) span residues 357–377, 428–448, and 505–525; these read LVGNWGWAIVLLTFVVKLVFF, GGCLPIVVQIPVFIALYWMLL, and PVMFTVFFVMFPAGLVLYWVV.

The protein belongs to the OXA1/ALB3/YidC family. Type 1 subfamily. In terms of assembly, interacts with the Sec translocase complex via SecD. Specifically interacts with transmembrane segments of nascent integral membrane proteins during membrane integration.

The protein resides in the cell inner membrane. In terms of biological role, required for the insertion and/or proper folding and/or complex formation of integral membrane proteins into the membrane. Involved in integration of membrane proteins that insert both dependently and independently of the Sec translocase complex, as well as at least some lipoproteins. Aids folding of multispanning membrane proteins. This is Membrane protein insertase YidC from Nitrosococcus oceani (strain ATCC 19707 / BCRC 17464 / JCM 30415 / NCIMB 11848 / C-107).